We begin with the raw amino-acid sequence, 340 residues long: Phosphate carrier protein, mitochondrial (340 aa).

The N-terminal 27 residues, 1–27 (MSVFSQLAESSKQNPFSLPVRSGNCAS), are a transit peptide targeting the mitochondrion. Solcar repeat units lie at residues 41-125 (KYYA…FKNV), 138-222 (YRTS…TVEA), and 239-317 (EQLV…VKVA). 6 consecutive transmembrane segments (helical) span residues 47 to 67 (ALGG…LDLV), 95 to 114 (RALV…QGLG), 141 to 161 (SLYL…LAPM), 200 to 220 (PLWM…EKTV), 241 to 261 (LVVT…VSHP), and 297 to 317 (IIMI…VKVA).

This sequence belongs to the mitochondrial carrier (TC 2.A.29) family.

The protein resides in the mitochondrion inner membrane. In terms of biological role, transport of phosphate groups from the cytosol to the mitochondrial matrix. In Caenorhabditis elegans, this protein is Phosphate carrier protein, mitochondrial.